Consider the following 176-residue polypeptide: CDP-archaeol synthase (176 aa).

The next 4 helical transmembrane spans lie at 41–61 (GLIG…FLYN), 73–93 (IITV…KSYF), 114–134 (VVGS…LNWF), and 138–158 (FDSV…SPLL).

It belongs to the CDP-archaeol synthase family. Mg(2+) is required as a cofactor.

Its subcellular location is the cell membrane. It carries out the reaction 2,3-bis-O-(geranylgeranyl)-sn-glycerol 1-phosphate + CTP + H(+) = CDP-2,3-bis-O-(geranylgeranyl)-sn-glycerol + diphosphate. The protein operates within membrane lipid metabolism; glycerophospholipid metabolism. Functionally, catalyzes the formation of CDP-2,3-bis-(O-geranylgeranyl)-sn-glycerol (CDP-archaeol) from 2,3-bis-(O-geranylgeranyl)-sn-glycerol 1-phosphate (DGGGP) and CTP. This reaction is the third ether-bond-formation step in the biosynthesis of archaeal membrane lipids. This Methanocorpusculum labreanum (strain ATCC 43576 / DSM 4855 / Z) protein is CDP-archaeol synthase.